Here is a 130-residue protein sequence, read N- to C-terminus: uncharacterized protein (130 aa).

It belongs to the thioester dehydratase family. FabZ subfamily.

This is an uncharacterized protein from Bacillus subtilis (strain 168).